The primary structure comprises 125 residues: Basic leucine zipper transcriptional factor ATF-like (125 aa).

Residues 1–14 are compositionally biased toward low complexity; it reads MPHSSDSSDSSFSR. The interval 1-58 is disordered; it reads MPHSSDSSDSSFSRSPPPGKQDSSDDVRRVQRREKNRIAAQKSRQRQTQKADTLHLES. One can recognise a bZIP domain in the interval 26–89; it reads DVRRVQRREK…KYFTSVLNSH (64 aa). The interval 28–50 is basic motif; that stretch reads RRVQRREKNRIAAQKSRQRQTQK. Phosphoserine is present on S43. Phosphothreonine is present on T48. The leucine-zipper stretch occupies residues 54–75; sequence LHLESEDLEKQNAALRKEIKQL.

The protein belongs to the bZIP family. As to quaternary structure, heterodimer; mainly heterodimerizes with JUNB. The BATF-JUNB heterodimer interacts with IRF4 and IRF8. Interacts (via bZIP domain) with IRF4 and IRF8; the interaction is direct. Also forms heterodimers with JUN and JUND. Also interacts with IFI35. Phosphorylated on serine and threonine residues and at least one tyrosine residue. Phosphorylation at Ser-43 inhibit DNA binding activity and transforms it as a negative regulator of AP-1 mediated transcription. In terms of processing, phosphorylated. In terms of tissue distribution, expressed at highest levels in lung, and at lower levels in placenta, liver, kidney, spleen, and peripheral blood. Detected in SW480 colorectal cancer cell line and several hematopoietic tumor cell lines, including Raji Burkitt's lymphoma. Strongly expressed in mature B- and T-lymphocytes. Also expressed in moderate levels in lymph node and appendix and at low levels in thymus and bone marrow.

It localises to the nucleus. It is found in the cytoplasm. AP-1 family transcription factor that controls the differentiation of lineage-specific cells in the immune system: specifically mediates the differentiation of T-helper 17 cells (Th17), follicular T-helper cells (TfH), CD8(+) dendritic cells and class-switch recombination (CSR) in B-cells. Acts via the formation of a heterodimer with JUNB that recognizes and binds DNA sequence 5'-TGA[CG]TCA-3'. The BATF-JUNB heterodimer also forms a complex with IRF4 (or IRF8) in immune cells, leading to recognition of AICE sequence (5'-TGAnTCA/GAAA-3'), an immune-specific regulatory element, followed by cooperative binding of BATF and IRF4 (or IRF8) and activation of genes. Controls differentiation of T-helper cells producing interleukin-17 (Th17 cells) by binding to Th17-associated gene promoters: regulates expression of the transcription factor RORC itself and RORC target genes such as IL17 (IL17A or IL17B). Also involved in differentiation of follicular T-helper cells (TfH) by directing expression of BCL6 and MAF. In B-cells, involved in class-switch recombination (CSR) by controlling the expression of both AICDA and of germline transcripts of the intervening heavy-chain region and constant heavy-chain region (I(H)-C(H)). Following infection, can participate in CD8(+) dendritic cell differentiation via interaction with IRF4 and IRF8 to mediate cooperative gene activation. Regulates effector CD8(+) T-cell differentiation by regulating expression of SIRT1. Following DNA damage, part of a differentiation checkpoint that limits self-renewal of hematopoietic stem cells (HSCs): up-regulated by STAT3, leading to differentiation of HSCs, thereby restricting self-renewal of HSCs. The protein is Basic leucine zipper transcriptional factor ATF-like (BATF) of Homo sapiens (Human).